The sequence spans 159 residues: 2-C-methyl-D-erythritol 2,4-cyclodiphosphate synthase (159 aa).

A divalent metal cation-binding residues include aspartate 8 and histidine 10. 4-CDP-2-C-methyl-D-erythritol 2-phosphate is bound by residues 8 to 10 (DVH) and 34 to 35 (HS). Residue histidine 42 coordinates a divalent metal cation. 4-CDP-2-C-methyl-D-erythritol 2-phosphate is bound by residues 56 to 58 (DIG), 61 to 65 (FPDTD), 100 to 106 (AQEPKMA), 132 to 135 (TTTE), phenylalanine 139, and arginine 142.

Belongs to the IspF family. Homotrimer. It depends on a divalent metal cation as a cofactor.

The catalysed reaction is 4-CDP-2-C-methyl-D-erythritol 2-phosphate = 2-C-methyl-D-erythritol 2,4-cyclic diphosphate + CMP. Its pathway is isoprenoid biosynthesis; isopentenyl diphosphate biosynthesis via DXP pathway; isopentenyl diphosphate from 1-deoxy-D-xylulose 5-phosphate: step 4/6. Its function is as follows. Involved in the biosynthesis of isopentenyl diphosphate (IPP) and dimethylallyl diphosphate (DMAPP), two major building blocks of isoprenoid compounds. Catalyzes the conversion of 4-diphosphocytidyl-2-C-methyl-D-erythritol 2-phosphate (CDP-ME2P) to 2-C-methyl-D-erythritol 2,4-cyclodiphosphate (ME-CPP) with a corresponding release of cytidine 5-monophosphate (CMP). This Alkaliphilus metalliredigens (strain QYMF) protein is 2-C-methyl-D-erythritol 2,4-cyclodiphosphate synthase.